The sequence spans 484 residues: 1,3-beta-glucanosyltransferase GAS5 (484 aa).

Positions Met1–Ala19 are cleaved as a signal peptide. Residues Asn24 and Asn60 are each glycosylated (N-linked (GlcNAc...) asparagine). An intrachain disulfide couples Cys71 to Cys100. 3 residues coordinate (1,3-beta-D-glucosyl)n: Tyr89, Asn159, and Glu160. Catalysis depends on Glu160, which acts as the Proton donor. Asn166 is a glycosylation site (N-linked (GlcNAc...) asparagine). (1,3-beta-D-glucosyl)n-binding residues include Asp201 and Arg206. 2 cysteine pairs are disulfide-bonded: Cys215–Cys348 and Cys234–Cys265. Glu262 (nucleophile) is an active-site residue. Tyr295 lines the (1,3-beta-D-glucosyl)n pocket. N-linked (GlcNAc...) asparagine glycans are attached at residues Asn299, Asn344, and Asn359. The interval Thr383–Gly462 is disordered. Over residues Lys394–Thr404 the composition is skewed to acidic residues. Low complexity predominate over residues Ser405–Gly462. Gly462 carries the GPI-anchor amidated glycine lipid modification. Positions Ala463–Leu484 are cleaved as a propeptide — removed in mature form.

This sequence belongs to the glycosyl hydrolase 72 family. Post-translationally, the GPI-anchor is attached to the protein in the endoplasmic reticulum and serves to target the protein to the cell surface. There, the glucosamine-inositol phospholipid moiety is cleaved off and the GPI-modified mannoprotein is covalently attached via its lipidless GPI glycan remnant to the 1,6-beta-glucan of the outer cell wall layer.

The protein resides in the secreted. It localises to the cell wall. Its subcellular location is the membrane. Its function is as follows. Splits internally a 1,3-beta-glucan molecule and transfers the newly generated reducing end (the donor) to the non-reducing end of another 1,3-beta-glucan molecule (the acceptor) forming a 1,3-beta linkage, resulting in the elongation of 1,3-beta-glucan chains in the cell wall. Involved in cell wall biosynthesis and morphogenesis. This is 1,3-beta-glucanosyltransferase GAS5 (GAS5) from Saccharomyces cerevisiae (strain ATCC 204508 / S288c) (Baker's yeast).